The following is a 249-amino-acid chain: DNA polymerase sliding clamp (249 aa).

The protein belongs to the PCNA family. Homotrimer. The subunits circularize to form a toroid; DNA passes through its center. Replication factor C (RFC) is required to load the toroid on the DNA.

Its function is as follows. Sliding clamp subunit that acts as a moving platform for DNA processing. Responsible for tethering the catalytic subunit of DNA polymerase and other proteins to DNA during high-speed replication. The protein is DNA polymerase sliding clamp of Methanococcus vannielii (strain ATCC 35089 / DSM 1224 / JCM 13029 / OCM 148 / SB).